The following is a 387-amino-acid chain: uncharacterized protein (387 aa).

A disordered region spans residues 1–23; the sequence is MSSLPRNAVARNSKMHKKRDSGV. Residues 98-129 are a coiled coil; it reads KIARDLKKRQEDYEKTKLEVERLKRSEELANK. Residues 146-255 are disordered; it reads ENNTVEPNNE…NKKKKKEKNK (110 aa). 2 stretches are compositionally biased toward low complexity: residues 162–175 and 182–194; these read EQITEQTVEQTTEQ and EQTTEKTTQQTAE. The span at 204–213 shows a compositional bias: basic and acidic residues; sequence TVEKSGDQST. Residues 214 to 231 show a composition bias toward polar residues; that stretch reads EKTTQQTAEESVEQSTEQ.

This is an uncharacterized protein from Acanthamoeba polyphaga mimivirus (APMV).